A 357-amino-acid chain; its full sequence is Crh-like protein 1 (357 aa).

Positions 1-17 (MMLPLLAVSAFASLGAA) are cleaved as a signal peptide. One can recognise a GH16 domain in the interval 20–220 (YTSCNPTNSL…WAGGETDYDE (201 aa)). N-linked (GlcNAc...) asparagine glycosylation is found at Asn-52 and Asn-92. Glu-109 functions as the Nucleophile in the catalytic mechanism. The active-site Proton donor is the Glu-113. Position 113 (Glu-113) interacts with chitin. N-linked (GlcNAc...) asparagine glycosylation occurs at Asn-131. Residues Lys-193, Trp-197, and Thr-208 each coordinate chitin. Residues Asn-242 and Asn-257 are each glycosylated (N-linked (GlcNAc...) asparagine). Residue Gly-326 is the site of GPI-anchor amidated glycine attachment. Positions 327 to 357 (SASAVFTGAAVTNLPSFFFTVFFALAIALAF) are cleaved as a propeptide — removed in mature form. The chain crosses the membrane as a helical span at residues 337–357 (VTNLPSFFFTVFFALAIALAF).

It belongs to the glycosyl hydrolase 16 family. CRH1 subfamily. The GPI-like anchor contains a phosphoceramide lipid group. The anchor position has not been determined.

It localises to the cell membrane. The protein resides in the secreted. It is found in the cell wall. It carries out the reaction Random endo-hydrolysis of N-acetyl-beta-D-glucosaminide (1-&gt;4)-beta-linkages in chitin and chitodextrins.. Functionally, dual chitinase/transglycosylase that plays a role in cell wall architecture. Chitinase and transglycosylase activities are coupled. Required for the polysaccharide cross-linking at the septa and the cell wall. More specifically, transfers chitin to 1,6-beta-glucan in the cell wall. This Aspergillus fumigatus (strain ATCC MYA-4609 / CBS 101355 / FGSC A1100 / Af293) (Neosartorya fumigata) protein is Crh-like protein 1.